The following is a 226-amino-acid chain: MMTNLFSVFDPSTTILNLSLNWLSTFLGLFLIPVSYWLMPNRFQVIWNNILLTLHKEFKTLLGPSGHNGSTLMFISLFSLIMFNNFLGLFPYIFTSTSHLTLTLALAFPLWLSFMLYGWINHTQHMFAHLVPQGTPPVLMPFMVCIETISNVIRPGTLAVRLTANMIAGHLLLTLLGNTGPMASNYLILSLILTTQIALLVLESAVAIIQSYVFAVLSTLYSSEVN.

The next 5 helical transmembrane spans lie at 18–38 (LSLNWLSTFLGLFLIPVSYWL), 74–94 (FISLFSLIMFNNFLGLFPYIF), 100–120 (LTLTLALAFPLWLSFMLYGWI), 158–180 (LAVRLTANMIAGHLLLTLLGNTG), and 197–217 (IALLVLESAVAIIQSYVFAVL).

Belongs to the ATPase A chain family. F-type ATPases have 2 components, CF(1) - the catalytic core - and CF(0) - the membrane proton channel. CF(1) has five subunits: alpha(3), beta(3), gamma(1), delta(1), epsilon(1). CF(0) has three main subunits: a, b and c.

It localises to the mitochondrion inner membrane. Functionally, mitochondrial membrane ATP synthase (F(1)F(0) ATP synthase or Complex V) produces ATP from ADP in the presence of a proton gradient across the membrane which is generated by electron transport complexes of the respiratory chain. F-type ATPases consist of two structural domains, F(1) - containing the extramembraneous catalytic core and F(0) - containing the membrane proton channel, linked together by a central stalk and a peripheral stalk. During catalysis, ATP synthesis in the catalytic domain of F(1) is coupled via a rotary mechanism of the central stalk subunits to proton translocation. Key component of the proton channel; it may play a direct role in the translocation of protons across the membrane. This Anopheles gambiae (African malaria mosquito) protein is ATP synthase subunit a (mt:ATPase6).